We begin with the raw amino-acid sequence, 101 residues long: Ubiquitin-related modifier 1 homolog 1 (101 aa).

Residue Gly101 is modified to 1-thioglycine. Residue Gly101 forms a Glycyl lysine isopeptide (Gly-Lys) (interchain with K-? in acceptor proteins) linkage.

The protein belongs to the URM1 family. Post-translationally, C-terminal thiocarboxylation occurs in 2 steps, it is first acyl-adenylated (-COAMP) via the hesA/moeB/thiF part of the MOCS3 homolog, then thiocarboxylated (-COSH) via the rhodanese domain of the MOCS3 homolog.

Its subcellular location is the cytoplasm. It participates in tRNA modification; 5-methoxycarbonylmethyl-2-thiouridine-tRNA biosynthesis. In terms of biological role, acts as a sulfur carrier required for 2-thiolation of mcm(5)S(2)U at tRNA wobble positions of cytosolic tRNA(Lys), tRNA(Glu) and tRNA(Gln). Serves as sulfur donor in tRNA 2-thiolation reaction by being thiocarboxylated (-COSH) at its C-terminus by MOCS3. The sulfur is then transferred to tRNA to form 2-thiolation of mcm(5)S(2)U. Also acts as a ubiquitin-like protein (UBL) that is covalently conjugated via an isopeptide bond to lysine residues of target proteins. The thiocarboxylated form serves as substrate for conjugation and oxidative stress specifically induces the formation of UBL-protein conjugates. The sequence is that of Ubiquitin-related modifier 1 homolog 1 from Arabidopsis thaliana (Mouse-ear cress).